The chain runs to 1063 residues: Lysine-specific demethylase phf2 (1063 aa).

The segment at 5–56 adopts a PHD-type zinc-finger fold; that stretch reads PVYCICRLPYDVTQFMIECDACKDWFHGSCVGVDEDEAPDIDIYHCPNCEKT. In terms of domain architecture, JmjC spans 197–353; it reads FSDARMANIV…MQMRAYEVEK (157 aa). Thr-246 provides a ligand contact to 2-oxoglutarate. Fe cation is bound by residues His-249 and Glu-251. Tyr-259 and Lys-266 together coordinate 2-oxoglutarate. Residue Asn-321 coordinates Fe cation. Disordered stretches follow at residues 448-546, 704-761, 773-864, and 879-1045; these read VSDS…LAAL, NIKE…SAGI, GIDY…DMFD, and YVYP…MATA. A compositionally biased stretch (low complexity) spans 460 to 477; it reads SEPSNSKPPAEEPPSALS. 2 stretches are compositionally biased toward basic and acidic residues: residues 513–540 and 723–745; these read PPKE…EKKP and KSPD…DVKG. Positions 746 to 755 are enriched in basic residues; sequence RNSKVSKKKG. A compositionally biased stretch (polar residues) spans 776–791; the sequence is YSNNSQPPASPSTQEA. Positions 813–833 are enriched in low complexity; that stretch reads SNSQAKNNSHSSAASKKPSGA. Basic residues predominate over residues 842 to 852; that stretch reads RPAKRLPKKTQ. The segment covering 920–929 has biased composition (basic and acidic residues); sequence RQERPAREGA. A compositionally biased stretch (basic residues) spans 953 to 964; sequence IKKKKKSAKKKP. Positions 965 to 975 are enriched in basic and acidic residues; sequence IVAEESHKLSH. 2 stretches are compositionally biased toward low complexity: residues 976-988 and 1021-1031; these read DSSS…DSES and SSSSSSQNASS. Phosphoserine; by PKA is present on Ser-1021.

Belongs to the JHDM1 histone demethylase family. JHDM1D subfamily.

It is found in the nucleus. Its subcellular location is the nucleolus. The protein resides in the chromosome. It localises to the centromere. The protein localises to the kinetochore. Its function is as follows. Lysine demethylase that demethylates both histones and non-histone proteins. Mediates demethylation of dimethylated 'Lys-9' of histone H3 (H3K9me2). Recruited to trimethylated 'Lys-4' of histone H3 (H3K4me3) at rDNA promoters and promotes expression of rDNA. The sequence is that of Lysine-specific demethylase phf2 (phf2) from Danio rerio (Zebrafish).